Reading from the N-terminus, the 426-residue chain is MAYRAEPPDGGWGWMVVLSAFFQSALVFGVLRSFGVFFVEFVAAFEEPAARVSWIASIGIAVQQFGSPVGSALSTKFGPRPAVMTGGILTALGMLLASFATSLTHLYLSIGLLSGSGWALTFTPTLACLSRYFSRRRSLAMGLALTGVGLSSFAFAPLFQWLLNHYAWRGALLLVSALSLHLVACGALLRPLSLAEDPVVGGPGAQITSLLRHGPFLRYTVALTLINTGYFIPYVHLVAHLRDLGWDPLPAAFLLSVAAISDLVGRVASGWLGDAVPGPVARLLMLWTTLTGVILALYPVAEAPTGLVALTMAYGFTSGALTPVAFSVLPELVGTGKIYCGLGLVQMVESIGGLLGAPLSGYLRDVTGNYTASFVVAGAFLLAGSGVLITLPHFFCFSAPTSKPQDLVTEALDTKVPLPEEGLGED.

The Cytoplasmic portion of the chain corresponds to 1 to 10 (MAYRAEPPDG). A run of 12 helical transmembrane segments spans residues 11-31 (GWGW…FGVL), 52-72 (VSWI…VGSA), 83-103 (VMTG…ATSL), 106-126 (LYLS…TPTL), 139-159 (LAMG…APLF), 172-192 (LLLV…LRPL), 221-241 (VALT…VAHL), 244-264 (LGWD…SDLV), 283-303 (LLML…VAEA), 306-326 (GLVA…PVAF), 338-358 (IYCG…LGAP), and 374-394 (FVVA…LPHF). Over 395–426 (FCFSAPTSKPQDLVTEALDTKVPLPEEGLGED) the chain is Cytoplasmic.

Belongs to the major facilitator superfamily. Monocarboxylate porter (TC 2.A.1.13) family.

It localises to the golgi apparatus membrane. It is found in the cell membrane. Functionally, proton-linked monocarboxylate transporter. May catalyze the transport of monocarboxylates across the plasma membrane. This Bos taurus (Bovine) protein is Monocarboxylate transporter 13 (SLC16A13).